The chain runs to 482 residues: PAN domain-containing protein At5g03700 (482 aa).

The first 31 residues, 1–31 (MEGLCLNSFTRVLLLLFVFLVFSHKWQRVNA), serve as a signal peptide directing secretion. The PAN domain maps to 330 to 411 (CDKTTEFKVV…SKLGYFKVRE (82 aa)). 2 disulfide bridges follow: Cys-363/Cys-385 and Cys-367/Cys-373. The helical transmembrane segment at 425 to 445 (GMSLLAVIALVLMVAMVYVGF) threads the bilayer.

The protein resides in the membrane. The polypeptide is PAN domain-containing protein At5g03700 (Arabidopsis thaliana (Mouse-ear cress)).